A 35-amino-acid polypeptide reads, in one-letter code: MTLAQFAMIFWHDLAAPILAGIITAAIVSWWRNRK.

A helical membrane pass occupies residues 8-28; it reads MIFWHDLAAPILAGIITAAIV.

Belongs to the Ldr toxic peptide family.

The protein localises to the cell inner membrane. Functionally, toxic component of a type I toxin-antitoxin (TA) system. Inhibits ATP synthesis possibly due to its insertion in the cell inner membrane, ATP levels drop over 50% 2 minutes after induction. Overexpression is toxic leading to cell death, it inhibits cell growth within 30 minutes; C-terminally tagged versions of the protein are toxic while N-terminally tagged versions are not. This Escherichia coli (strain K12) protein is Small toxic polypeptide LdrA (ldrA).